The chain runs to 262 residues: ATP synthase subunit a (262 aa).

Helical transmembrane passes span Ala24–Phe44, Val84–Leu104, Asp129–Val149, Pro165–Ala185, Leu194–Ala214, and Leu228–Leu248.

It belongs to the ATPase A chain family. As to quaternary structure, F-type ATPases have 2 components, CF(1) - the catalytic core - and CF(0) - the membrane proton channel. CF(1) has five subunits: alpha(3), beta(3), gamma(1), delta(1), epsilon(1). CF(0) has three main subunits: a(1), b(2) and c(9-12). The alpha and beta chains form an alternating ring which encloses part of the gamma chain. CF(1) is attached to CF(0) by a central stalk formed by the gamma and epsilon chains, while a peripheral stalk is formed by the delta and b chains.

It localises to the cell inner membrane. Its function is as follows. Key component of the proton channel; it plays a direct role in the translocation of protons across the membrane. In Actinobacillus pleuropneumoniae serotype 7 (strain AP76), this protein is ATP synthase subunit a.